The sequence spans 356 residues: 1-deoxy-D-xylulose 5-phosphate reductoisomerase (356 aa).

The NADPH site is built by T7, G8, S9, I10, G31, N33, and N111. Residue K112 participates in 1-deoxy-D-xylulose 5-phosphate binding. E113 contributes to the NADPH binding site. Residue D131 coordinates Mn(2+). Residues S132, E133, S155, and H178 each coordinate 1-deoxy-D-xylulose 5-phosphate. E133 contributes to the Mn(2+) binding site. G184 serves as a coordination point for NADPH. 4 residues coordinate 1-deoxy-D-xylulose 5-phosphate: S191, N196, K197, and E200. E200 provides a ligand contact to Mn(2+).

It belongs to the DXR family. It depends on Mg(2+) as a cofactor. Requires Mn(2+) as cofactor.

It carries out the reaction 2-C-methyl-D-erythritol 4-phosphate + NADP(+) = 1-deoxy-D-xylulose 5-phosphate + NADPH + H(+). The protein operates within isoprenoid biosynthesis; isopentenyl diphosphate biosynthesis via DXP pathway; isopentenyl diphosphate from 1-deoxy-D-xylulose 5-phosphate: step 1/6. Catalyzes the NADPH-dependent rearrangement and reduction of 1-deoxy-D-xylulose-5-phosphate (DXP) to 2-C-methyl-D-erythritol 4-phosphate (MEP). This is 1-deoxy-D-xylulose 5-phosphate reductoisomerase from Campylobacter jejuni subsp. jejuni serotype O:6 (strain 81116 / NCTC 11828).